A 1742-amino-acid chain; its full sequence is Complement C4 (1742 aa).

Residues 1–19 (MRLLWGLLWAFGLFASSLQ) form the signal peptide. Residue Asn-60 is glycosylated (N-linked (GlcNAc...) asparagine). Cys-68 and Cys-97 are disulfide-bonded. Asn-226 is a glycosylation site (N-linked (GlcNAc...) asparagine). Cys-634 and Cys-668 are disulfide-bonded. A propeptide spanning residues 675–678 (RKKR) is cleaved from the precursor. 3 disulfides stabilise this stretch: Cys-701–Cys-727, Cys-702–Cys-734, and Cys-715–Cys-735. One can recognise an Anaphylatoxin-like domain in the interval 701–735 (CCQDGLTRLPMVRSCEQRAARVLQPACREPFLSCC). A glycan (N-linked (GlcNAc...) asparagine) is linked at Asn-861. The segment at residues 1007 to 1010 (CGEQ) is a cross-link (isoglutamyl cysteine thioester (Cys-Gln)). N-linked (GlcNAc...) asparagine glycans are attached at residues Asn-1325 and Asn-1388. Tyr-1414, Tyr-1418, and Tyr-1420 each carry sulfotyrosine. A propeptide spanning residues 1445–1451 (RRNRRRR) is cleaved from the precursor. 5 disulfide bridges follow: Cys-1469–Cys-1533, Cys-1581–Cys-1586, Cys-1593–Cys-1671, Cys-1616–Cys-1740, and Cys-1716–Cys-1725. Residues 1593–1740 (CPRQRRALER…FIQEYSTLGC (148 aa)) enclose the NTR domain.

In absence of complement activation, circulates in blood as a disulfide-linked trimer of an alpha, beta and gamma chain. In terms of assembly, complement C4b is composed of complement C4b-A, complement C4 beta and complement C4 gamma chains that are associated via disulfide bonds. Non-enzymatic component of the C3 convertase, also named C4bC2b, composed of the serine protease complement C2b (C2), as well as complement C4b. Non-enzymatic component of the C5 convertase, also named C4bC2bC3b, composed of the serine protease complement C2b (C2), complement C3b, as well as complement C4b. In terms of processing, prior to secretion, the single-chain precursor is enzymatically cleaved by plasminogen (PLG) to yield non-identical chains alpha, beta and gamma. During activation of the complement systems, the alpha chain is cleaved into C4a and C4b by different proteases depending on the complement pathway: C4b stays linked to the beta and gamma chains, while C4a is released in the plasma. The alpha chain is cleaved by C1S to generate C4a and C4b following activation by the classical complement system. The alpha chain is cleaved to generate C4a and C4b by MASP2 following activation by the lectin complement system. The alpha chain is cleaved by GZMK to generate C4a and C4b following activation by the GZMK complement system. Further degradation of C4b by C1 into the inactive fragments C4c and C4d blocks the generation of C3 convertase. The proteolytic cleavages often are incomplete so that many structural forms can be found in plasma. Upon activation, the internal thioester bond reacts with carbohydrate antigens on the target surface to form amide or ester bonds, leading to covalent association with the surface of pathogens. Post-translationally, complement C4b interacts with complement C3b via a thioester linkage. In terms of processing, N- and O-glycosylated. O-glycosylated with a core 1 or possibly core 8 glycan.

It localises to the secreted. It is found in the cell surface. Precursor of non-enzymatic components of the classical, lectin and GZMK complement pathways, which consist in a cascade of proteins that leads to phagocytosis and breakdown of pathogens and signaling that strengthens the adaptive immune system. In terms of biological role, non-enzymatic component of C3 and C5 convertases. Generated following cleavage by complement proteases (C1S, MASP2 or GZMK, depending on the complement pathway), it covalently attaches to the surface of pathogens, where it acts as an opsonin that marks the surface of antigens for removal. It then recruits the serine protease complement C2b to form the C3 and C5 convertases, which cleave and activate C3 and C5, respectively, the next components of the complement pathways. Complement C4b-A isotype is responsible for effective binding to form amide bonds with immune aggregates or protein antigens, while complement C4b-B isotype catalyzes the transacylation of the thioester carbonyl group to form ester bonds with carbohydrate antigens. Its function is as follows. Putative humoral mediator released following cleavage by complement proteases (C1S, MASP2 or GZMK, depending on the complement pathway). While it is strongly similar to anaphylatoxins, its role is unclear. Was reported to act as a mediator of local inflammatory process; however these effects were probably due to contamination with C3a and/C5a anaphylatoxins in biological assays. This chain is Complement C4, found in Cavia porcellus (Guinea pig).